Here is a 210-residue protein sequence, read N- to C-terminus: Protein GrpE (210 aa).

The segment at methionine 1–leucine 71 is disordered. The span at threonine 11–glutamine 23 shows a compositional bias: acidic residues. A compositionally biased stretch (polar residues) spans asparagine 24–threonine 35. The span at aspartate 36–glutamate 46 shows a compositional bias: low complexity. Residues asparagine 47 to serine 60 show a composition bias toward acidic residues. Positions glutamine 61–leucine 71 are enriched in basic and acidic residues.

It belongs to the GrpE family. In terms of assembly, homodimer.

The protein resides in the cytoplasm. Functionally, participates actively in the response to hyperosmotic and heat shock by preventing the aggregation of stress-denatured proteins, in association with DnaK and GrpE. It is the nucleotide exchange factor for DnaK and may function as a thermosensor. Unfolded proteins bind initially to DnaJ; upon interaction with the DnaJ-bound protein, DnaK hydrolyzes its bound ATP, resulting in the formation of a stable complex. GrpE releases ADP from DnaK; ATP binding to DnaK triggers the release of the substrate protein, thus completing the reaction cycle. Several rounds of ATP-dependent interactions between DnaJ, DnaK and GrpE are required for fully efficient folding. This is Protein GrpE from Staphylococcus epidermidis (strain ATCC 35984 / DSM 28319 / BCRC 17069 / CCUG 31568 / BM 3577 / RP62A).